A 315-amino-acid polypeptide reads, in one-letter code: Type II methyltransferase M.Bsp6I (315 aa).

The SAM-dependent MTase C5-type domain maps to 2 to 315 (LQIASLFAGV…IAENIYKSML (314 aa)). Cys-73 is an active-site residue.

It belongs to the class I-like SAM-binding methyltransferase superfamily. C5-methyltransferase family.

The catalysed reaction is a 2'-deoxycytidine in DNA + S-adenosyl-L-methionine = a 5-methyl-2'-deoxycytidine in DNA + S-adenosyl-L-homocysteine + H(+). Its function is as follows. A methylase that recognizes the double-stranded sequence 5'-GCNGC-3', methylates C-? on both strands, and protects the DNA from cleavage by the Bsp6I endonuclease. This chain is Type II methyltransferase M.Bsp6I, found in Bacillus sp. (strain RFL6).